The sequence spans 357 residues: Maleylacetate reductase 1 (357 aa).

It belongs to the iron-containing alcohol dehydrogenase family.

It catalyses the reaction 3-oxoadipate + NAD(+) = maleylacetate + NADH + H(+). The enzyme catalyses 3-oxoadipate + NADP(+) = maleylacetate + NADPH + H(+). It functions in the pathway aromatic compound metabolism; 3-chlorocatechol degradation. Functionally, plays a major role in the degradation of chloroaromatic compounds by channeling maleylacetate and some of its substituted derivatives into the 3-oxoadipate pathway. This enzyme converts maleylacetate and 2-chloromaleylacetate with similar efficiencies. The chain is Maleylacetate reductase 1 (macA) from Rhodococcus opacus (Nocardia opaca).